A 367-amino-acid polypeptide reads, in one-letter code: Queuine tRNA-ribosyltransferase (367 aa).

Asp92 (proton acceptor) is an active-site residue. Residues Asp92 to Phe96, Asp146, Gln188, and Gly215 each bind substrate. The segment at Gly246–Asp252 is RNA binding. Asp265 serves as the catalytic Nucleophile. Cys303, Cys305, Cys308, and His334 together coordinate Zn(2+).

This sequence belongs to the queuine tRNA-ribosyltransferase family. As to quaternary structure, homodimer. Within each dimer, one monomer is responsible for RNA recognition and catalysis, while the other monomer binds to the replacement base PreQ1. The cofactor is Zn(2+).

It carries out the reaction 7-aminomethyl-7-carbaguanine + guanosine(34) in tRNA = 7-aminomethyl-7-carbaguanosine(34) in tRNA + guanine. It participates in tRNA modification; tRNA-queuosine biosynthesis. Its function is as follows. Catalyzes the base-exchange of a guanine (G) residue with the queuine precursor 7-aminomethyl-7-deazaguanine (PreQ1) at position 34 (anticodon wobble position) in tRNAs with GU(N) anticodons (tRNA-Asp, -Asn, -His and -Tyr). Catalysis occurs through a double-displacement mechanism. The nucleophile active site attacks the C1' of nucleotide 34 to detach the guanine base from the RNA, forming a covalent enzyme-RNA intermediate. The proton acceptor active site deprotonates the incoming PreQ1, allowing a nucleophilic attack on the C1' of the ribose to form the product. After dissociation, two additional enzymatic reactions on the tRNA convert PreQ1 to queuine (Q), resulting in the hypermodified nucleoside queuosine (7-(((4,5-cis-dihydroxy-2-cyclopenten-1-yl)amino)methyl)-7-deazaguanosine). The polypeptide is Queuine tRNA-ribosyltransferase (Francisella tularensis subsp. tularensis (strain FSC 198)).